The primary structure comprises 902 residues: HTH-type transcriptional regulator MalT (902 aa).

Position 39 to 46 (39 to 46) interacts with ATP; the sequence is SPAGYGKT. Positions 832-897 constitute an HTH luxR-type domain; it reads ELVRTSPLTQ…EAIVTAENLL (66 aa). Positions 856 to 875 form a DNA-binding region, H-T-H motif; it reads NEQIAQELDVAGTTIKTHIR.

Belongs to the MalT family. As to quaternary structure, monomer in solution. Oligomerizes to an active state in the presence of the positive effectors ATP and maltotriose.

Activated by ATP and maltotriose, which are both required for DNA binding. In terms of biological role, positively regulates the transcription of the maltose regulon whose gene products are responsible for uptake and catabolism of malto-oligosaccharides. Specifically binds to the promoter region of its target genes, recognizing a short DNA motif called the MalT box. The chain is HTH-type transcriptional regulator MalT from Vibrio campbellii (strain ATCC BAA-1116).